The chain runs to 737 residues: Zinc finger protein 184 (737 aa).

Residues 28 to 99 enclose the KRAB domain; sequence VTFKDVVVNF…DSCIPVGPLE (72 aa). Ser117 bears the Phosphoserine mark. Lys185 participates in a covalent cross-link: Glycyl lysine isopeptide (Lys-Gly) (interchain with G-Cter in SUMO2). 17 C2H2-type zinc fingers span residues 201 to 223, 229 to 251, 257 to 279, 285 to 307, 313 to 335, 341 to 363, 369 to 391, 397 to 419, 425 to 447, 453 to 475, 481 to 503, 509 to 531, 537 to 559, 565 to 587, 593 to 615, 621 to 643, and 649 to 671; these read CKCN…QRTH, YKCN…QRIH, YKCD…QRIH, YTCT…QKIH, FKCE…QKIH, YKCN…HMIH, YECN…QKTH, YDCA…LKIH, YKCS…RRIH, FECS…QKTH, YECK…ERIH, YQCH…KKIH, YKCN…KRIH, YACP…QKTH, YQCN…QRIH, and YKCS…RSTH. The segment at 677-698 adopts a C2H2-type 18; degenerate zinc-finger fold; that stretch reads YNSECPQTFSQSTYLTQHQKIH. The C2H2-type 19 zinc-finger motif lies at 704–726; the sequence is LGCEDCEKAFQCHSALTKHQRLH.

This sequence belongs to the krueppel C2H2-type zinc-finger protein family.

It localises to the nucleus. In terms of biological role, may be involved in transcriptional regulation. The polypeptide is Zinc finger protein 184 (Zfp184) (Mus musculus (Mouse)).